Reading from the N-terminus, the 610-residue chain is Zinc metalloproteinase-disintegrin-like acurhagin (610 aa).

The first 20 residues, 1-20 (MIQVLLVTICLAAFPYQGSS), serve as a signal peptide directing secretion. Positions 21 to 191 (IILESGDVND…ISQLNLIPEQ (171 aa)) are excised as a propeptide. Residue Gln192 is modified to Pyrrolidone carboxylic acid. The Peptidase M12B domain maps to 198-394 (KYVETVVVVD…HNPECIDNEP (197 aa)). Ca(2+)-binding residues include Glu201 and Asp285. 3 cysteine pairs are disulfide-bonded: Cys309–Cys389, Cys349–Cys373, and Cys351–Cys356. His334 provides a ligand contact to Zn(2+). Residue Glu335 is part of the active site. 2 residues coordinate Zn(2+): His338 and His344. N-linked (GlcNAc...) asparagine glycosylation occurs at Asn372. Residues Cys389, Asn392, Asn407, Leu409, Glu411, Glu414, and Asp417 each coordinate Ca(2+). The region spanning 402 to 488 (PPLCGNELLE…ECPADVFHKN (87 aa)) is the Disintegrin domain. Disulfide bonds link Cys405/Cys434, Cys416/Cys429, Cys418/Cys424, Cys428/Cys451, Cys442/Cys448, Cys447/Cys473, Cys460/Cys480, Cys467/Cys499, Cys492/Cys504, Cys511/Cys561, Cys526/Cys572, Cys539/Cys549, Cys556/Cys598, and Cys592/Cys603. The D/ECD-tripeptide motif lies at 466–468 (ECD). The Ca(2+) site is built by Asp468, Pro469, Glu471, Asp483, and Val484.

It belongs to the venom metalloproteinase (M12B) family. P-III subfamily. P-IIIa sub-subfamily. In terms of assembly, monomer. Zn(2+) serves as cofactor. In terms of processing, N-glycosylated. As to expression, expressed by the venom gland.

It localises to the secreted. Its activity is regulated as follows. The proteinase activity is slightly enhanced by Ca(2+) and Mg(2+), but is completely inhibited by Zn(2+). Is completely inhibited by phenanthroline and EDTA. Not inhibited by PMSF. In terms of biological role, snake venom zinc metalloprotease that causes hemorrhage and dose-dependently inhibits platelet aggregation triggered by collagen. This inhibition is due to its binding to glycoprotein VI (GP6) and collagen. The binding to GP6 results in inhibition of the signaling pathway (decrease of tyrosine phosphorylation of signaling proteins such as Syk, LAT, PI3-K and PLCgamma2). Preferentially cleaves alpha chain (FGA) of fibrinogen, followed by beta chain (FGB). Also degrades the extracellular matrix protein fibronectin (FN1), and cleaves collagen and von Willebrand factor (VWF). This chain is Zinc metalloproteinase-disintegrin-like acurhagin, found in Deinagkistrodon acutus (Hundred-pace snake).